We begin with the raw amino-acid sequence, 145 residues long: D-aminoacyl-tRNA deacylase (145 aa).

The Gly-cisPro motif, important for rejection of L-amino acids motif lies at 137–138; that stretch reads GP.

Belongs to the DTD family. As to quaternary structure, homodimer.

The protein localises to the cytoplasm. It catalyses the reaction glycyl-tRNA(Ala) + H2O = tRNA(Ala) + glycine + H(+). The enzyme catalyses a D-aminoacyl-tRNA + H2O = a tRNA + a D-alpha-amino acid + H(+). An aminoacyl-tRNA editing enzyme that deacylates mischarged D-aminoacyl-tRNAs. Also deacylates mischarged glycyl-tRNA(Ala), protecting cells against glycine mischarging by AlaRS. Acts via tRNA-based rather than protein-based catalysis; rejects L-amino acids rather than detecting D-amino acids in the active site. By recycling D-aminoacyl-tRNA to D-amino acids and free tRNA molecules, this enzyme counteracts the toxicity associated with the formation of D-aminoacyl-tRNA entities in vivo and helps enforce protein L-homochirality. The chain is D-aminoacyl-tRNA deacylase from Francisella tularensis subsp. holarctica (strain FTNF002-00 / FTA).